A 216-amino-acid polypeptide reads, in one-letter code: Sperm microtubule inner protein 8 (216 aa).

In terms of assembly, microtubule inner protein component of sperm flagellar doublet microtubules. As to expression, expressed in testis, prostate and placenta.

It localises to the cytoplasm. The protein localises to the cytoskeleton. Its subcellular location is the flagellum axoneme. Microtubule inner protein (MIP) part of the dynein-decorated doublet microtubules (DMTs) in flagellum axoneme. May serve to reinforce and thus stabilize the microtubule structure in the sperm flagella. The polypeptide is Sperm microtubule inner protein 8 (Homo sapiens (Human)).